We begin with the raw amino-acid sequence, 1079 residues long: Electrogenic sodium bicarbonate cotransporter 1 (1079 aa).

Residues 1–62 (MEDEAVLDRG…EKKEKERISE (62 aa)) are required for interaction with AHCYL1. Topologically, residues 1–466 (MEDEAVLDRG…FASDFYDALN (466 aa)) are cytoplasmic. Glu-21 is subject to Phosphoserine. Tyr-30 carries the post-translational modification Phosphotyrosine. A compositionally biased stretch (basic residues) spans 39–52 (YRRRRRHKRKAGHK). Positions 39 to 78 (YRRRRRHKRKAGHKEKKEKERISENYSDKSDVENADESSS) are disordered. Residues 53–70 (EKKEKERISENYSDKSDV) are compositionally biased toward basic and acidic residues. 7 positions are modified to phosphoserine: Ser-61, Ser-65, Ser-68, Ser-223, Ser-232, Ser-233, and Ser-245. Positions 235–266 (SRMFSNPDNGSPAMTHRNLTSSSLNDISDKPE) are disordered. Residues Thr-249 and Thr-254 each carry the phosphothreonine modification. Polar residues predominate over residues 251–260 (RNLTSSSLND). Ser-256, Ser-257, and Ser-262 each carry phosphoserine. A helical transmembrane segment spans residues 467–491 (IQALSAILFIYLATVTNAITFGGLL). The Extracellular segment spans residues 492 to 501 (GDATDNMQGV). A helical membrane pass occupies residues 502–520 (LESFLGTAVSGAIFCLFAG). A topological domain (cytoplasmic) is located at residue Gln-521. The chain crosses the membrane as a discontinuously helical span at residues 522–542 (PLTILSSTGPVLVFERLLFNF). Residues 543 to 550 (SKDHNFDY) are Extracellular-facing. The helical transmembrane segment at 551-571 (LEFRLWIGLWSAFMCLVLVAT) threads the bilayer. Over 572 to 585 (DASFLVQYFTRFTE) the chain is Cytoplasmic. Residues 586-609 (EGFSSLISFIFIYDAFKKMIKLAD) form a helical membrane-spanning segment. Residues 610-692 (YYPINSDFKV…GNNCDFVPDI (83 aa)) lie on the Extracellular side of the membrane. Residues 693-710 (TLMSFILFLGTYTSSMAM) form a helical membrane-spanning segment. Over 711–725 (KKFKTSRYFPTTARK) the chain is Cytoplasmic. A helical membrane pass occupies residues 726–745 (LISDFAIILSILIFCVIDAL). At 746–779 (VGVDTPKLIVPSEFKPTSPNRGWFVPPFGGNPWW) the chain is on the extracellular side. Positions 748–779 (VDTPKLIVPSEFKPTSPNRGWFVPPFGGNPWW) are interaction with CA4. Residues 780 to 807 (VCLAAAIPALLVTILIFMDQQITAVIVN) traverse the membrane as a helical segment. Topologically, residues 808–819 (RKEHKLKKGAGY) are cytoplasmic. A helical membrane pass occupies residues 820-836 (HLDLFWVAILMVVCSFM). Position 837 (Ala-837) is a topological domain, extracellular. A discontinuously helical membrane pass occupies residues 838 to 855 (LPWYVAATVISIAHIDSL). Residues 856 to 877 (KMETETSAPGEQPKFLGVREQR) are Cytoplasmic-facing. Residues 878-894 (VTGTLVFILTGLSVFMA) traverse the membrane as a helical segment. Residues 895 to 901 (PILKFIP) lie on the Extracellular side of the membrane. A helical transmembrane segment spans residues 902–918 (MPVLYGVFLYMGVASLN). Topologically, residues 919 to 960 (GVQFMDRLKLLLMPLKHQPDFIYLRHVPLRRVHLFTFLQVLC) are cytoplasmic. An intramembrane region (discontinuously helical) is located at residues 961–986 (LALLWILKSTVAAIIFPVMILALVAV). Residues 987–1079 (RKGMDYLFSQ…STFLERHTSC (93 aa)) are Cytoplasmic-facing. The tract at residues 1002–1004 (LDD) is CA2-binding. The interval 1012–1079 (KKKEDEKKKK…STFLERHTSC (68 aa)) is disordered. 2 positions are modified to phosphoserine: Ser-1026 and Ser-1029. The segment at 1030 to 1033 (DNDD) is CA2-binding. 2 positions are modified to phosphoserine: Ser-1034 and Ser-1044. Residues 1057–1059 (FLS) are required for basolateral targeting. Residues 1062–1079 (KPLDRERSSTFLERHTSC) are compositionally biased toward basic and acidic residues. Ser-1069 carries the phosphoserine modification.

The protein belongs to the anion exchanger (TC 2.A.31) family. In terms of assembly, homodimer. Interacts with CA2/carbonic anhydrase 2 and CA4/carbonic anhydrase 4 which may regulate transporter activity. Isoform 1 but not isoform 2 interacts with AHCYL1 (via PEST domain when phosphorylated); the interaction increases SLC4A4 isoform 1 activity. Interacts with AHCYL2. Post-translationally, phosphorylation of Ser-1026 by PKA increases the binding of CA2 and changes the Na(+):HCO3(-) stoichiometry of the transporter from 3:1 to 2:1. Phosphorylated in presence of STK39 and dephosphorylated in presence of PP1 phosphatase; phosphorylation seems to inhibit SLC4A4 activity. N-glycosylated. May not be necessary for the transporter basic functions. In terms of tissue distribution, isoform 1 is specifically expressed in pancreatic ducts and acini. Also expressed in parotid acinar cells and in the colonic crypts.

It is found in the basolateral cell membrane. The protein resides in the cell membrane. It carries out the reaction 2 hydrogencarbonate(out) + Na(+)(out) = 2 hydrogencarbonate(in) + Na(+)(in). It catalyses the reaction 3 hydrogencarbonate(out) + Na(+)(out) = 3 hydrogencarbonate(in) + Na(+)(in). Its activity is regulated as follows. Activated by cyclic AMP. Electrogenic sodium/bicarbonate cotransporter with a Na(+):HCO3(-) stoichiometry varying from 1:2 to 1:3. May regulate bicarbonate influx/efflux at the basolateral membrane of cells and regulate intracellular pH. This Mus musculus (Mouse) protein is Electrogenic sodium bicarbonate cotransporter 1 (Slc4a4).